A 144-amino-acid chain; its full sequence is 3-dehydroquinate dehydratase (144 aa).

The Proton acceptor role is filled by Y24. 3 residues coordinate substrate: N73, H79, and D86. H99 (proton donor) is an active-site residue. Substrate-binding positions include 100 to 101 (LS) and R110.

It belongs to the type-II 3-dehydroquinase family. Homododecamer.

The enzyme catalyses 3-dehydroquinate = 3-dehydroshikimate + H2O. Its pathway is metabolic intermediate biosynthesis; chorismate biosynthesis; chorismate from D-erythrose 4-phosphate and phosphoenolpyruvate: step 3/7. Catalyzes a trans-dehydration via an enolate intermediate. This Shewanella sp. (strain ANA-3) protein is 3-dehydroquinate dehydratase.